The primary structure comprises 629 residues: Forkhead box protein O (629 aa).

Thr49 bears the Phosphothreonine; by PKB/AKT1 mark. Ser78 carries the phosphoserine modification. The fork-head DNA-binding region spans 98–204 (WGNLSYADLI…ETSRYEKRRG (107 aa)). Disordered regions lie at residues 185 to 208 (KSVR…RAKK), 220 to 274 (GLND…SPIR), 321 to 368 (QQQF…QTLQ), 394 to 417 (SPNS…DSLN), and 563 to 597 (QHLQ…NSSL). Ser193 carries the post-translational modification Phosphoserine; by PKB/AKT1. 2 stretches are compositionally biased toward polar residues: residues 224–233 (ATPSPSSSVS) and 259–268 (RASSNASSCG). Ser262 carries the post-translational modification Phosphoserine; by PKB/AKT1. Phosphoserine occurs at positions 265, 266, and 271. Residues 332–341 (SQPPPPPYQP) show a composition bias toward pro residues. The span at 342–356 (PQLQQQQQQQPSYSL) shows a compositional bias: low complexity. A compositionally biased stretch (polar residues) spans 394–403 (SPNSVTTTMS).

In terms of assembly, interacts with melt.

It localises to the cytoplasm. The protein localises to the nucleus. Transcription factor involved in the regulation of the insulin signaling pathway. Consistently activates both the downstream target Thor\d4EBP and the feedback control target InR. Involved in negative regulation of the cell cycle, modulating cell growth and proliferation. In response to cellular stresses, such as nutrient deprivation or increased levels of reactive oxygen species, foxo is activated and inhibits growth through the action of target genes such as Thor. Foxo activated in the adult fat body can regulate lifespan in adults; an insulin peptide itself may function as one secondary messenger of insulin-regulated aging. Also regulates Lip4, homolog of human acid lipases, thereby acting as a key modulator of lipid metabolism by insulin signaling and integrates insulin responses to glucose and lipid homeostasis. This is Forkhead box protein O from Drosophila persimilis (Fruit fly).